The chain runs to 318 residues: Carbamate kinase (318 aa).

It belongs to the carbamate kinase family.

The protein localises to the cytoplasm. It carries out the reaction hydrogencarbonate + NH4(+) + ATP = carbamoyl phosphate + ADP + H2O + H(+). Its pathway is metabolic intermediate metabolism; carbamoyl phosphate degradation; CO(2) and NH(3) from carbamoyl phosphate: step 1/1. In Lentilactobacillus hilgardii (Lactobacillus hilgardii), this protein is Carbamate kinase (arcC).